A 388-amino-acid polypeptide reads, in one-letter code: MEELREAFEEGKPVILIDRNRENEADFVFPAQLITEDVVSFFVTYGKGLFCVTADEEDLLKRGFVKLSSNYGANYFVPVDWGTGTGISALERAETCRKLAEGRYFHEFRYPGHVTVIGGIGFQRRKGHTEASLEISELAGFSRHAVIVEILDEKGNSHNLDYVLKLSEKFSLPVLEMDDVWREFVKRKLLMKKKAEATLPTDFGVFKVVSFENHLDGKEHFAIVKEPLEDPVAVRIHSECVTGDVLSSLRCDCGSQLANFLRYMSAHGGILIYLRQEGRGIGLSNKIAAYSLQDKGLDTVEANRVLGFSEDERDYAPAAQILKALGIERVLLFTNNQRKTVGLEKYGIEVVETKRLYGRVTPHNRFYLSTKMKKLGHELEEIFREVNS.

Residues methionine 1–lysine 186 are DHBP synthase. Residues arginine 21 to glutamate 22, aspartate 26, arginine 125 to threonine 129, and glutamate 149 each bind D-ribulose 5-phosphate. Glutamate 22 serves as a coordination point for Mg(2+). Histidine 128 is a binding site for Mg(2+). The GTP cyclohydrolase II stretch occupies residues arginine 187–serine 388. Arginine 235–glutamate 239 is a GTP binding site. Cysteine 240, cysteine 251, and cysteine 253 together coordinate Zn(2+). Residues glutamine 256, glutamate 277 to arginine 279, and threonine 299 each bind GTP. Catalysis depends on aspartate 311, which acts as the Proton acceptor; for GTP cyclohydrolase activity. The active-site Nucleophile; for GTP cyclohydrolase activity is the arginine 313. Positions 334 and 339 each coordinate GTP.

It in the N-terminal section; belongs to the DHBP synthase family. This sequence in the C-terminal section; belongs to the GTP cyclohydrolase II family. The cofactor is Mg(2+). Mn(2+) is required as a cofactor. It depends on Zn(2+) as a cofactor.

It carries out the reaction D-ribulose 5-phosphate = (2S)-2-hydroxy-3-oxobutyl phosphate + formate + H(+). The catalysed reaction is GTP + 4 H2O = 2,5-diamino-6-hydroxy-4-(5-phosphoribosylamino)-pyrimidine + formate + 2 phosphate + 3 H(+). Its pathway is cofactor biosynthesis; riboflavin biosynthesis; 2-hydroxy-3-oxobutyl phosphate from D-ribulose 5-phosphate: step 1/1. It participates in cofactor biosynthesis; riboflavin biosynthesis; 5-amino-6-(D-ribitylamino)uracil from GTP: step 1/4. Catalyzes the conversion of D-ribulose 5-phosphate to formate and 3,4-dihydroxy-2-butanone 4-phosphate. In terms of biological role, catalyzes the conversion of GTP to 2,5-diamino-6-ribosylamino-4(3H)-pyrimidinone 5'-phosphate (DARP), formate and pyrophosphate. The sequence is that of Riboflavin biosynthesis protein RibBA from Thermotoga maritima (strain ATCC 43589 / DSM 3109 / JCM 10099 / NBRC 100826 / MSB8).